The following is a 185-amino-acid chain: Ribosome-recycling factor (185 aa).

It belongs to the RRF family.

It is found in the cytoplasm. Functionally, responsible for the release of ribosomes from messenger RNA at the termination of protein biosynthesis. May increase the efficiency of translation by recycling ribosomes from one round of translation to another. The protein is Ribosome-recycling factor of Wolbachia pipientis wMel.